The chain runs to 191 residues: 2-amino-4-hydroxy-6-hydroxymethyldihydropteridine pyrophosphokinase (191 aa).

It belongs to the HPPK family.

The catalysed reaction is 6-hydroxymethyl-7,8-dihydropterin + ATP = (7,8-dihydropterin-6-yl)methyl diphosphate + AMP + H(+). It functions in the pathway cofactor biosynthesis; tetrahydrofolate biosynthesis; 2-amino-4-hydroxy-6-hydroxymethyl-7,8-dihydropteridine diphosphate from 7,8-dihydroneopterin triphosphate: step 4/4. Its function is as follows. Catalyzes the transfer of pyrophosphate from adenosine triphosphate (ATP) to 6-hydroxymethyl-7,8-dihydropterin, an enzymatic step in folate biosynthesis pathway. The polypeptide is 2-amino-4-hydroxy-6-hydroxymethyldihydropteridine pyrophosphokinase (folK) (Mycobacterium leprae (strain TN)).